Consider the following 58-residue polypeptide: Small ribosomal subunit protein bS21 (58 aa).

A compositionally biased stretch (basic and acidic residues) spans 32–42 (ARRREHYEKPS). The segment at 32-58 (ARRREHYEKPSVRRKKKSEAARKRRWH) is disordered. A compositionally biased stretch (basic residues) spans 43 to 58 (VRRKKKSEAARKRRWH).

The protein belongs to the bacterial ribosomal protein bS21 family.

The protein is Small ribosomal subunit protein bS21 of Moorella thermoacetica (strain ATCC 39073 / JCM 9320).